Here is a 41-residue protein sequence, read N- to C-terminus: Photosystem II reaction center protein L (41 aa).

The chain crosses the membrane as a helical span at residues 20–40 (SLYLGLLLVFVVGILFSSYFF).

The protein belongs to the PsbL family. As to quaternary structure, PSII is composed of 1 copy each of membrane proteins PsbA, PsbB, PsbC, PsbD, PsbE, PsbF, PsbH, PsbI, PsbJ, PsbK, PsbL, PsbM, PsbT, PsbX, PsbY, PsbZ, Psb30/Ycf12, peripheral proteins PsbO, CyanoQ (PsbQ), PsbU, PsbV and a large number of cofactors. It forms dimeric complexes.

The protein resides in the cellular thylakoid membrane. One of the components of the core complex of photosystem II (PSII). PSII is a light-driven water:plastoquinone oxidoreductase that uses light energy to abstract electrons from H(2)O, generating O(2) and a proton gradient subsequently used for ATP formation. It consists of a core antenna complex that captures photons, and an electron transfer chain that converts photonic excitation into a charge separation. This subunit is found at the monomer-monomer interface and is required for correct PSII assembly and/or dimerization. In Trichodesmium erythraeum (strain IMS101), this protein is Photosystem II reaction center protein L.